The following is a 161-amino-acid chain: Small ribosomal subunit protein uS9 (161 aa).

This sequence belongs to the universal ribosomal protein uS9 family.

The protein is Small ribosomal subunit protein uS9 of Bartonella bacilliformis (strain ATCC 35685 / KC583 / Herrer 020/F12,63).